We begin with the raw amino-acid sequence, 151 residues long: Small ribosomal subunit protein uS15 (151 aa).

It belongs to the universal ribosomal protein uS15 family.

The polypeptide is Small ribosomal subunit protein uS15 (RpS13) (Choristoneura parallela (Spotted fireworm moth)).